The chain runs to 140 residues: Sex-regulated protein janus-B (140 aa).

Arg-42 provides a ligand contact to substrate. The Proton acceptor role is filled by His-69. 110–112 is a binding site for substrate; the sequence is SRT.

It belongs to the janus family.

JanA and janB regulate somatic sex differentiation. In Drosophila erecta (Fruit fly), this protein is Sex-regulated protein janus-B (janB).